The following is a 272-amino-acid chain: MTRQWETLREYDEIKYEFYEGIAKVTINRPEVRNAFTPKTVAEMIDAFSRARDDQNISVIILTGEGDKAFCSGGDQKKRGHGGYVGEDQIPRLNVLDLQRLIRVIPKPVIAMVRGYAIGGGNVLNVVCDLTIAADNAIFGQTGPKVGSFDAGYGSGYLARIVGHKKAREIWYLCRQYNAQEALDMGLVNTVVPLDQIEDETVQWCKEIMKHSPTALRFLKAAMNADTDGLAGLQQMAGDATLLYYTTDEAKEGRDAFKEKRDPDFDQFPKFP.

Residues R33, 72–76 (SGGDQ), Y84, 116–120 (YAIGG), T142, S148, Y245, and K260 each bind substrate. 141–143 (QTG) serves as a coordination point for hydrogencarbonate. Positions 253 to 264 (GRDAFKEKRDPD) are enriched in basic and acidic residues. Positions 253–272 (GRDAFKEKRDPDFDQFPKFP) are disordered.

The protein belongs to the enoyl-CoA hydratase/isomerase family. MenB subfamily. The cofactor is hydrogencarbonate.

It catalyses the reaction 2-succinylbenzoyl-CoA + H(+) = 1,4-dihydroxy-2-naphthoyl-CoA + H2O. Its pathway is quinol/quinone metabolism; 1,4-dihydroxy-2-naphthoate biosynthesis; 1,4-dihydroxy-2-naphthoate from chorismate: step 6/7. It functions in the pathway quinol/quinone metabolism; menaquinone biosynthesis. Its function is as follows. Converts o-succinylbenzoyl-CoA (OSB-CoA) to 1,4-dihydroxy-2-naphthoyl-CoA (DHNA-CoA). This is 1,4-dihydroxy-2-naphthoyl-CoA synthase from Staphylococcus haemolyticus (strain JCSC1435).